A 258-amino-acid chain; its full sequence is Granzyme A (258 aa).

The first 26 residues, 1-26, serve as a signal peptide directing secretion; the sequence is MNIPFPFSFPPAICLLLIPGVFPVSC. Positions 27–28 are cleaved as a propeptide — activation peptide; it reads EG. A Peptidase S1 domain is found at 29 to 255; it reads IIGGNEVAPH…HLNWIKKTIA (227 aa). C52 and C68 are disulfide-bonded. Active-site charge relay system residues include H67 and D112. 3 disulfides stabilise this stretch: C146/C217, C178/C196, and C207/C230. Residue N169 is glycosylated (N-linked (GlcNAc...) asparagine). Residue S211 is the Charge relay system of the active site.

The protein belongs to the peptidase S1 family. Granzyme subfamily. Homodimer; disulfide-linked. Interacts with APEX1.

The protein localises to the secreted. The protein resides in the cytoplasmic granule. The enzyme catalyses Hydrolysis of proteins, including fibronectin, type IV collagen and nucleolin. Preferential cleavage: -Arg-|-Xaa-, -Lys-|-Xaa- &gt;&gt; -Phe-|-Xaa- in small molecule substrates.. Functionally, abundant protease in the cytosolic granules of cytotoxic T-cells and NK-cells which activates caspase-independent pyroptosis when delivered into the target cell through the immunological synapse. It cleaves after Lys or Arg. Cleaves APEX1 after 'Lys-31' and destroys its oxidative repair activity. Cleaves the nucleosome assembly protein SET after 'Lys-189', which disrupts its nucleosome assembly activity and allows the SET complex to translocate into the nucleus to nick and degrade the DNA. The chain is Granzyme A (GZMA) from Bos taurus (Bovine).